A 151-amino-acid polypeptide reads, in one-letter code: 3-hydroxyacyl-[acyl-carrier-protein] dehydratase FabZ (151 aa).

Residue His49 is part of the active site.

Belongs to the thioester dehydratase family. FabZ subfamily.

The protein localises to the cytoplasm. The enzyme catalyses a (3R)-hydroxyacyl-[ACP] = a (2E)-enoyl-[ACP] + H2O. Involved in unsaturated fatty acids biosynthesis. Catalyzes the dehydration of short chain beta-hydroxyacyl-ACPs and long chain saturated and unsaturated beta-hydroxyacyl-ACPs. The chain is 3-hydroxyacyl-[acyl-carrier-protein] dehydratase FabZ from Bordetella petrii (strain ATCC BAA-461 / DSM 12804 / CCUG 43448).